A 120-amino-acid polypeptide reads, in one-letter code: Large ribosomal subunit protein uL22 (120 aa).

The disordered stretch occupies residues 1-25 (MFVNKKYTAKGKNLPSSPKKVRPIA).

The protein belongs to the universal ribosomal protein uL22 family. As to quaternary structure, part of the 50S ribosomal subunit.

This protein binds specifically to 23S rRNA; its binding is stimulated by other ribosomal proteins, e.g. L4, L17, and L20. It is important during the early stages of 50S assembly. It makes multiple contacts with different domains of the 23S rRNA in the assembled 50S subunit and ribosome. Functionally, the globular domain of the protein is located near the polypeptide exit tunnel on the outside of the subunit, while an extended beta-hairpin is found that lines the wall of the exit tunnel in the center of the 70S ribosome. The chain is Large ribosomal subunit protein uL22 from Borrelia recurrentis (strain A1).